The sequence spans 388 residues: Mannitol-1-phosphate 5-dehydrogenase (388 aa).

Residue 3–14 participates in NAD(+) binding; sequence ALHFGAGNIGRG.

Belongs to the mannitol dehydrogenase family.

It catalyses the reaction D-mannitol 1-phosphate + NAD(+) = beta-D-fructose 6-phosphate + NADH + H(+). This Buchnera aphidicola subsp. Schizaphis graminum (strain Sg) protein is Mannitol-1-phosphate 5-dehydrogenase.